A 570-amino-acid polypeptide reads, in one-letter code: Peptidyl-prolyl cis-trans isomerase CYP63 (570 aa).

One can recognise a PPIase cyclophilin-type domain in the interval 10–174; sequence FLDVSIGGDP…SPVKIIDCGE (165 aa). Residues 180–570 are disordered; that stretch reads AHDAAEREKG…GKRGLVSYAD (391 aa). The span at 203 to 219 shows a compositional bias: basic and acidic residues; it reads VSDREAKETRKKESNEK. Composition is skewed to low complexity over residues 229–238 and 246–259; these read SSDSYSSSSD and EAYSSSSYESSSSS. The segment covering 262-292 has biased composition (basic residues); it reads KHRKRKSTTRHKGRRGERKSKGRSGKKKARP. The segment covering 297 to 309 has biased composition (low complexity); the sequence is STNSSSDTESSSS. The segment covering 323–339 has biased composition (basic and acidic residues); the sequence is VKVDNADQHANLDDSVK. Residue serine 340 is modified to Phosphoserine. Residues 340-351 are compositionally biased toward basic residues; that stretch reads SRSRSPIRRRNQ. Over residues 352-365 the composition is skewed to low complexity; sequence NSRSKSPSRSPVRV. Basic and acidic residues-rich tracts occupy residues 387-397 and 437-467; these read SPREKPTEETV and SPPRHWPDRRNFQDRNRDRYPSNRSYSERSP. The segment covering 468 to 490 has biased composition (basic residues); it reads RGRFRSPPRRRSPPRYNRRRRST. The segment covering 495–505 has biased composition (basic and acidic residues); sequence DGYRRRLRDGS. A compositionally biased stretch (basic residues) spans 509–523; it reads SPRHRSRSQSPRKRQ. Residues 546-555 are compositionally biased toward low complexity; it reads SPAESLSPSH.

The protein belongs to the cyclophilin-type PPIase family. In terms of assembly, interacts with SNRNP35, RNU1, SCL28, SCL30, SR30 and SR34. The binding to SR34 is phosphorylation-dependent. In terms of tissue distribution, ubiquitous.

The protein localises to the nucleus. It localises to the nucleoplasm. Its subcellular location is the nucleus speckle. It carries out the reaction [protein]-peptidylproline (omega=180) = [protein]-peptidylproline (omega=0). Its function is as follows. PPIases accelerate the folding of proteins. It catalyzes the cis-trans isomerization of proline imidic peptide bonds in oligopeptides. May be implicated in the folding, transport, and assembly of proteins. Probably involved in early steps of spliceosomal assembly. The polypeptide is Peptidyl-prolyl cis-trans isomerase CYP63 (CYP63) (Arabidopsis thaliana (Mouse-ear cress)).